The following is a 953-amino-acid chain: Translation initiation factor IF-2 (953 aa).

The interval 55–340 (GVTTEAPAAS…KSKRQKRNEY (286 aa)) is disordered. Positions 81 to 93 (KPAATPQQAAKPA) are enriched in low complexity. The span at 110 to 119 (PKPAAKPVPK) shows a compositional bias: pro residues. Composition is skewed to low complexity over residues 123-133 (SAAKAESSAPK) and 143-160 (KPAAQSSTTATPGSMPRP). Gly residues predominate over residues 202–219 (PGGGPRPGGNRPQGGQGG). Over residues 233–248 (QPRPQGGSRSQQSGGQ) the composition is skewed to low complexity. Residues 280-323 (NGRGGAGGQGGRPGFGGGRPGGGGSAGGRGGRRGGTAGAFGRPG) are compositionally biased toward gly residues. Positions 327-336 (RKGRKSKRQK) are enriched in basic residues. Residues 449–621 (KRPPVVTVMG…VLLTADASLD (173 aa)) form the tr-type G domain. Residues 458–465 (GHVDHGKT) form a G1 region. 458 to 465 (GHVDHGKT) contacts GTP. The segment at 483–487 (GITQG) is G2. The G3 stretch occupies residues 508 to 511 (DTPG). Residues 508-512 (DTPGH) and 562-565 (NKID) contribute to the GTP site. The interval 562-565 (NKID) is G4. Residues 598 to 600 (SAK) are G5.

Belongs to the TRAFAC class translation factor GTPase superfamily. Classic translation factor GTPase family. IF-2 subfamily.

It localises to the cytoplasm. Its function is as follows. One of the essential components for the initiation of protein synthesis. Protects formylmethionyl-tRNA from spontaneous hydrolysis and promotes its binding to the 30S ribosomal subunits. Also involved in the hydrolysis of GTP during the formation of the 70S ribosomal complex. The sequence is that of Translation initiation factor IF-2 from Corynebacterium diphtheriae (strain ATCC 700971 / NCTC 13129 / Biotype gravis).